Consider the following 359-residue polypeptide: Type II restriction enzyme HgiDI (359 aa).

The enzyme catalyses Endonucleolytic cleavage of DNA to give specific double-stranded fragments with terminal 5'-phosphates.. Its function is as follows. A P subtype restriction enzyme that recognizes the double-stranded sequence 5'-GRCGYC-3' and cleaves after R-2. The chain is Type II restriction enzyme HgiDI from Herpetosiphon aurantiacus (Herpetosiphon giganteus).